The chain runs to 883 residues: Kinesin-like protein 5 (883 aa).

A Kinesin motor domain is found at 6–390 (SITVTVRVRP…LKYANRAKNI (385 aa)). 144–151 (GATGCGKT) is a binding site for ATP. 2 coiled-coil regions span residues 396–435 (RNMI…SSQS) and 563–588 (LQDE…VDEF). The disordered stretch occupies residues 755 to 785 (VSPMLEDKPEPGLLIKSPLEKKQEVNSESTQ).

Belongs to the TRAFAC class myosin-kinesin ATPase superfamily. Kinesin family. Kinesin II subfamily. Heterodimer with klp6.

The protein localises to the cytoplasm. The protein resides in the cytoskeleton. Its subcellular location is the chromosome. It localises to the centromere. It is found in the kinetochore. The protein localises to the spindle. Functionally, has a role in establishing metaphase during mitosis. Required for chromosome segregation where it generates tension during kinetochore capturing. This is Kinesin-like protein 5 (klp5) from Schizosaccharomyces pombe (strain 972 / ATCC 24843) (Fission yeast).